A 457-amino-acid polypeptide reads, in one-letter code: UDP-N-acetylmuramate--L-alanyl-gamma-D-glutamyl-meso-2,6-diaminoheptandioate ligase (457 aa).

110-116 contacts ATP; that stretch reads GTHGKTT.

This sequence belongs to the MurCDEF family. Mpl subfamily. It depends on Mg(2+) as a cofactor.

It is found in the secreted. The catalysed reaction is UDP-N-acetyl-alpha-D-muramate + L-alanyl-gamma-D-glutamyl-meso-2,6-diaminopimelate + ATP = UDP-N-acetyl-alpha-D-muramoyl-L-alanyl-gamma-D-glutamyl-meso-2,6-diaminopimelate + ADP + phosphate + H(+). Its pathway is cell wall biogenesis; peptidoglycan recycling. Functionally, reutilizes the intact tripeptide L-alanyl-gamma-D-glutamyl-meso-diaminopimelate by linking it to UDP-N-acetylmuramate. The enzyme can also use the tetrapeptide L-alanyl-gamma-D-glutamyl-meso-2,6-diaminoheptanedioyl-D-alanine or the pentapeptide L-alanyl-gamma-D-glutamyl-meso-2,6-diaminoheptandioyl-D-alanyl-D-alanine in vivo and in vitro. This is UDP-N-acetylmuramate--L-alanyl-gamma-D-glutamyl-meso-2,6-diaminoheptandioate ligase from Escherichia coli (strain K12).